The sequence spans 226 residues: UPF0758 protein Daci_1904 (226 aa).

The 123-residue stretch at 104-226 (ALASPEAVAR…SLSMAGQGML (123 aa)) folds into the MPN domain. Zn(2+)-binding residues include His-175, His-177, and Asp-188. The short motif at 175 to 188 (HNHPSGQVQASAAD) is the JAMM motif element.

Belongs to the UPF0758 family.

This Delftia acidovorans (strain DSM 14801 / SPH-1) protein is UPF0758 protein Daci_1904.